The primary structure comprises 375 residues: Dual-specificity RNA methyltransferase RlmN (375 aa).

Residue Glu-98 is the Proton acceptor of the active site. In terms of domain architecture, Radical SAM core spans 106–346 (GGKRRTLCVS…VRTTRGDDID (241 aa)). Residues Cys-113 and Cys-349 are joined by a disulfide bond. Residues Cys-120, Cys-124, and Cys-127 each contribute to the [4Fe-4S] cluster site. S-adenosyl-L-methionine contacts are provided by residues 174-175 (GE), Ser-206, 228-230 (SLH), and Asn-306. Cys-349 acts as the S-methylcysteine intermediate in catalysis.

Belongs to the radical SAM superfamily. RlmN family. Requires [4Fe-4S] cluster as cofactor.

The protein resides in the cytoplasm. The enzyme catalyses adenosine(2503) in 23S rRNA + 2 reduced [2Fe-2S]-[ferredoxin] + 2 S-adenosyl-L-methionine = 2-methyladenosine(2503) in 23S rRNA + 5'-deoxyadenosine + L-methionine + 2 oxidized [2Fe-2S]-[ferredoxin] + S-adenosyl-L-homocysteine. It catalyses the reaction adenosine(37) in tRNA + 2 reduced [2Fe-2S]-[ferredoxin] + 2 S-adenosyl-L-methionine = 2-methyladenosine(37) in tRNA + 5'-deoxyadenosine + L-methionine + 2 oxidized [2Fe-2S]-[ferredoxin] + S-adenosyl-L-homocysteine. Specifically methylates position 2 of adenine 2503 in 23S rRNA and position 2 of adenine 37 in tRNAs. m2A2503 modification seems to play a crucial role in the proofreading step occurring at the peptidyl transferase center and thus would serve to optimize ribosomal fidelity. This Chromohalobacter salexigens (strain ATCC BAA-138 / DSM 3043 / CIP 106854 / NCIMB 13768 / 1H11) protein is Dual-specificity RNA methyltransferase RlmN.